The following is a 383-amino-acid chain: 1-deoxy-D-xylulose 5-phosphate reductoisomerase (383 aa).

6 residues coordinate NADPH: Thr10, Gly11, Ser12, Ile13, Asn38, and Asn121. A 1-deoxy-D-xylulose 5-phosphate-binding site is contributed by Lys122. Glu123 serves as a coordination point for NADPH. Position 147 (Asp147) interacts with Mn(2+). Residues Ser148, Glu149, Ser172, and His195 each coordinate 1-deoxy-D-xylulose 5-phosphate. Glu149 is a Mn(2+) binding site. Gly201 contacts NADPH. Residues Ser208, Asn213, Lys214, and Glu217 each coordinate 1-deoxy-D-xylulose 5-phosphate. Glu217 lines the Mn(2+) pocket.

It belongs to the DXR family. Mg(2+) serves as cofactor. Mn(2+) is required as a cofactor.

It carries out the reaction 2-C-methyl-D-erythritol 4-phosphate + NADP(+) = 1-deoxy-D-xylulose 5-phosphate + NADPH + H(+). Its pathway is isoprenoid biosynthesis; isopentenyl diphosphate biosynthesis via DXP pathway; isopentenyl diphosphate from 1-deoxy-D-xylulose 5-phosphate: step 1/6. Functionally, catalyzes the NADPH-dependent rearrangement and reduction of 1-deoxy-D-xylulose-5-phosphate (DXP) to 2-C-methyl-D-erythritol 4-phosphate (MEP). This Ruthia magnifica subsp. Calyptogena magnifica protein is 1-deoxy-D-xylulose 5-phosphate reductoisomerase.